The sequence spans 427 residues: Glutamate-1-semialdehyde 2,1-aminomutase (427 aa).

Position 268 is an N6-(pyridoxal phosphate)lysine (K268).

The protein belongs to the class-III pyridoxal-phosphate-dependent aminotransferase family. HemL subfamily. The cofactor is pyridoxal 5'-phosphate.

Its subcellular location is the cytoplasm. It carries out the reaction (S)-4-amino-5-oxopentanoate = 5-aminolevulinate. It functions in the pathway porphyrin-containing compound metabolism; protoporphyrin-IX biosynthesis; 5-aminolevulinate from L-glutamyl-tRNA(Glu): step 2/2. This Methanococcus maripaludis (strain C7 / ATCC BAA-1331) protein is Glutamate-1-semialdehyde 2,1-aminomutase.